The primary structure comprises 259 residues: Type III pantothenate kinase (259 aa).

Residue 6-13 participates in ATP binding; the sequence is DVGNTNIV. Substrate contacts are provided by residues Tyr-100 and 107-110; that span reads GADR. The Proton acceptor role is filled by Asp-109. Asp-129 contributes to the K(+) binding site. Position 132 (Thr-132) interacts with ATP. Thr-184 is a substrate binding site.

This sequence belongs to the type III pantothenate kinase family. Homodimer. Requires NH4(+) as cofactor. The cofactor is K(+).

It is found in the cytoplasm. It catalyses the reaction (R)-pantothenate + ATP = (R)-4'-phosphopantothenate + ADP + H(+). Its pathway is cofactor biosynthesis; coenzyme A biosynthesis; CoA from (R)-pantothenate: step 1/5. Functionally, catalyzes the phosphorylation of pantothenate (Pan), the first step in CoA biosynthesis. The protein is Type III pantothenate kinase of Clostridium perfringens (strain 13 / Type A).